Here is a 196-residue protein sequence, read N- to C-terminus: Small ribosomal subunit protein uS4c (196 aa).

A disordered region spans residues A17–F36. The 62-residue stretch at M89–N150 folds into the S4 RNA-binding domain.

It belongs to the universal ribosomal protein uS4 family. Part of the 30S ribosomal subunit. Contacts protein S5. The interaction surface between S4 and S5 is involved in control of translational fidelity.

It localises to the plastid. It is found in the chloroplast. One of the primary rRNA binding proteins, it binds directly to 16S rRNA where it nucleates assembly of the body of the 30S subunit. In terms of biological role, with S5 and S12 plays an important role in translational accuracy. This chain is Small ribosomal subunit protein uS4c (rps4), found in Phyllostachys flexuosa (Drooping timber bamboo).